A 196-amino-acid polypeptide reads, in one-letter code: dITP/XTP pyrophosphatase (196 aa).

A substrate-binding site is contributed by Thr10–Lys15. Asp71 (proton acceptor) is an active-site residue. A Mg(2+)-binding site is contributed by Asp71. Substrate is bound by residues Ser72, Phe156 to Asp159, Lys179, and His184 to Arg185.

The protein belongs to the HAM1 NTPase family. Homodimer. It depends on Mg(2+) as a cofactor.

The enzyme catalyses XTP + H2O = XMP + diphosphate + H(+). It carries out the reaction dITP + H2O = dIMP + diphosphate + H(+). The catalysed reaction is ITP + H2O = IMP + diphosphate + H(+). Its function is as follows. Pyrophosphatase that catalyzes the hydrolysis of nucleoside triphosphates to their monophosphate derivatives, with a high preference for the non-canonical purine nucleotides XTP (xanthosine triphosphate), dITP (deoxyinosine triphosphate) and ITP. Seems to function as a house-cleaning enzyme that removes non-canonical purine nucleotides from the nucleotide pool, thus preventing their incorporation into DNA/RNA and avoiding chromosomal lesions. The polypeptide is dITP/XTP pyrophosphatase (Haemophilus ducreyi (strain 35000HP / ATCC 700724)).